The following is a 145-amino-acid chain: Globin-1 (145 aa).

The 145-residue stretch at 1 to 145 (GISADQAKAL…VIVPGMKAGY (145 aa)) folds into the Globin domain. Heme b-binding residues include His63 and His92.

This sequence belongs to the globin family. As to quaternary structure, monomer.

This is Globin-1 from Liolophura japonica (Chiton).